The chain runs to 536 residues: Probable 1,4-beta-D-glucan cellobiohydrolase B (536 aa).

The signal sequence occupies residues Met-1–Ala-21. Residues Gln-22–Ser-458 form a catalytic region. Glu-233 (nucleophile) is an active-site residue. The active-site Proton donor is Glu-238. 2 N-linked (GlcNAc...) asparagine glycosylation sites follow: Asn-351 and Asn-414. The segment at Thr-459–Ser-500 is ser/Thr-rich linker. A disordered region spans residues Ser-464 to Thr-499. The CBM1 domain occupies Ser-500–Leu-536. Intrachain disulfides connect Cys-508–Cys-525 and Cys-519–Cys-535.

This sequence belongs to the glycosyl hydrolase 7 (cellulase C) family.

It localises to the secreted. The enzyme catalyses Hydrolysis of (1-&gt;4)-beta-D-glucosidic linkages in cellulose and cellotetraose, releasing cellobiose from the non-reducing ends of the chains.. Functionally, the biological conversion of cellulose to glucose generally requires three types of hydrolytic enzymes: (1) Endoglucanases which cut internal beta-1,4-glucosidic bonds; (2) Exocellobiohydrolases that cut the disaccharide cellobiose from the non-reducing end of the cellulose polymer chain; (3) Beta-1,4-glucosidases which hydrolyze the cellobiose and other short cello-oligosaccharides to glucose. The polypeptide is Probable 1,4-beta-D-glucan cellobiohydrolase B (cbhB) (Aspergillus niger (strain ATCC MYA-4892 / CBS 513.88 / FGSC A1513)).